We begin with the raw amino-acid sequence, 276 residues long: Elongation factor Ts (276 aa).

The segment at 80–83 is involved in Mg(2+) ion dislocation from EF-Tu; the sequence is TDFV.

It belongs to the EF-Ts family.

Its subcellular location is the cytoplasm. Its function is as follows. Associates with the EF-Tu.GDP complex and induces the exchange of GDP to GTP. It remains bound to the aminoacyl-tRNA.EF-Tu.GTP complex up to the GTP hydrolysis stage on the ribosome. In Kocuria rhizophila (strain ATCC 9341 / DSM 348 / NBRC 103217 / DC2201), this protein is Elongation factor Ts.